Consider the following 205-residue polypeptide: Holliday junction resolvase RecU (205 aa).

Residues Thr83, Asp85, Glu98, and Gln117 each coordinate Mg(2+).

It belongs to the RecU family. Mg(2+) serves as cofactor.

The protein localises to the cytoplasm. It carries out the reaction Endonucleolytic cleavage at a junction such as a reciprocal single-stranded crossover between two homologous DNA duplexes (Holliday junction).. In terms of biological role, endonuclease that resolves Holliday junction intermediates in genetic recombination. Cleaves mobile four-strand junctions by introducing symmetrical nicks in paired strands. Promotes annealing of linear ssDNA with homologous dsDNA. Required for DNA repair, homologous recombination and chromosome segregation. In Streptococcus suis (strain 98HAH33), this protein is Holliday junction resolvase RecU.